Here is a 419-residue protein sequence, read N- to C-terminus: Protein arginine N-methyltransferase 8-B (419 aa).

Residues 1 to 14 (MGLRHSSRCLLLRR) are compositionally biased toward basic residues. The interval 1–79 (MGLRHSSRCL…HTPHVSALSA (79 aa)) is disordered. The N-myristoyl glycine moiety is linked to residue Gly-2. Low complexity predominate over residues 33–63 (QHQQQQSISSIPSSQSLQPSPLPKPVTSVHH). At Arg-83 the chain carries Omega-N-methylarginine. Arg-98 carries the post-translational modification Asymmetric dimethylarginine. Residues 98–402 (RDYYFDSYAH…RDLDFTFELD (305 aa)) enclose the SAM-dependent MTase PRMT-type domain. Residues His-111, Arg-120, Gly-144, 144–147 (GSGT), Glu-166, and Glu-195 contribute to the S-adenosyl-L-methionine site. Residues Glu-210 and Glu-219 contribute to the active site.

It belongs to the class I-like SAM-binding methyltransferase superfamily. Protein arginine N-methyltransferase family. PRMT8 subfamily. As to quaternary structure, homodimer. Tetramer; individual homodimers associates to form a homotetramer. Homooctamer; individual homodimers associates to form a homooctamer and homooligomerization is required for proper localization to the cell membrane.

The protein resides in the cell membrane. The catalysed reaction is L-arginyl-[protein] + S-adenosyl-L-methionine = N(omega)-methyl-L-arginyl-[protein] + S-adenosyl-L-homocysteine + H(+). It carries out the reaction L-arginyl-[protein] + 2 S-adenosyl-L-methionine = N(omega),N(omega)-dimethyl-L-arginyl-[protein] + 2 S-adenosyl-L-homocysteine + 2 H(+). S-adenosyl-L-methionine-dependent and membrane-associated arginine methyltransferase that can both catalyze the formation of omega-N monomethylarginine (MMA) and asymmetrical dimethylarginine (aDMA). In Danio rerio (Zebrafish), this protein is Protein arginine N-methyltransferase 8-B (prmt8b).